The chain runs to 91 residues: Probable Fe(2+)-trafficking protein (91 aa).

This sequence belongs to the Fe(2+)-trafficking protein family.

Functionally, could be a mediator in iron transactions between iron acquisition and iron-requiring processes, such as synthesis and/or repair of Fe-S clusters in biosynthetic enzymes. The protein is Probable Fe(2+)-trafficking protein of Glaesserella parasuis serovar 5 (strain SH0165) (Haemophilus parasuis).